Consider the following 237-residue polypeptide: Uridylate kinase (237 aa).

Residue 10–13 (KFSG) coordinates ATP. Residues 18 to 23 (GDSGFG) form an involved in allosteric activation by GTP region. Gly-52 contributes to the UMP binding site. Positions 53 and 57 each coordinate ATP. Residues Asp-73 and 134–141 (TGNPFFTT) contribute to the UMP site. Residues Thr-161, Tyr-167, and Asp-170 each contribute to the ATP site.

This sequence belongs to the UMP kinase family. In terms of assembly, homohexamer.

It is found in the cytoplasm. The enzyme catalyses UMP + ATP = UDP + ADP. It functions in the pathway pyrimidine metabolism; CTP biosynthesis via de novo pathway; UDP from UMP (UMPK route): step 1/1. Its activity is regulated as follows. Allosterically activated by GTP. Inhibited by UTP. In terms of biological role, catalyzes the reversible phosphorylation of UMP to UDP. In Campylobacter hominis (strain ATCC BAA-381 / DSM 21671 / CCUG 45161 / LMG 19568 / NCTC 13146 / CH001A), this protein is Uridylate kinase.